The chain runs to 230 residues: Alpha-S1-casein (230 aa).

A signal peptide spans 1–15 (MKLLILTCLVAVALA). Phosphoserine occurs at positions 33, 83, 85, 86, 87, and 88. The segment covering 60–83 (DELKDTRNEPTEDHIMEDTERKES) has biased composition (basic and acidic residues). 2 disordered regions span residues 60–103 (DELK…DILK) and 211–230 (TPEG…PQWW). Over residues 84–96 (GSSSSEEVVSSTT) the composition is skewed to low complexity.

This sequence belongs to the alpha-casein family. Mammary gland specific. Secreted in milk.

It is found in the secreted. In terms of biological role, important role in the capacity of milk to transport calcium phosphate. The protein is Alpha-S1-casein (CSN1S1) of Camelus dromedarius (Dromedary).